Here is a 214-residue protein sequence, read N- to C-terminus: Orotate phosphoribosyltransferase (214 aa).

A 5-phospho-alpha-D-ribose 1-diphosphate-binding site is contributed by Lys26. Residue 34–35 (FF) participates in orotate binding. 5-phospho-alpha-D-ribose 1-diphosphate-binding positions include 72–73 (YK), Arg99, Lys100, Lys103, His105, and 124–132 (DDVITAGTA). Orotate-binding residues include Thr128 and Arg156.

It belongs to the purine/pyrimidine phosphoribosyltransferase family. PyrE subfamily. In terms of assembly, homodimer. The cofactor is Mg(2+).

The enzyme catalyses orotidine 5'-phosphate + diphosphate = orotate + 5-phospho-alpha-D-ribose 1-diphosphate. The protein operates within pyrimidine metabolism; UMP biosynthesis via de novo pathway; UMP from orotate: step 1/2. In terms of biological role, catalyzes the transfer of a ribosyl phosphate group from 5-phosphoribose 1-diphosphate to orotate, leading to the formation of orotidine monophosphate (OMP). The protein is Orotate phosphoribosyltransferase of Mannheimia succiniciproducens (strain KCTC 0769BP / MBEL55E).